Reading from the N-terminus, the 534-residue chain is Glycerophosphodiester transporter GIT2 (534 aa).

A run of 12 helical transmembrane segments spans residues 63 to 83 (GAGLFADGYVNNSIGIVMACL), 96 to 116 (AISNIGSIGFVGTVVGQLSFG), 135 to 155 (LIAFTLLCAVGSWGTTIQGFF), 163 to 183 (FCLGVAIGAEYPTSSVIASEF), 202 to 222 (FMIDFGFVVSAFVPFVLLWIF), 230 to 250 (LWRVSIGLGAILPTALFFIRL), 289 to 309 (MIWFIYNFSVYSFGTFNAIIL), 322 to 342 (WGWSVVFNLFYIPGSFLGAFS), 350 to 370 (LTLAIGVGLQGIIGFIMSACL), 377 to 397 (VAAFTVVFGIFATLGEFGPGG), 417 to 437 (GIAAAMGKIGAFVGTWIFPAI), and 453 to 473 (VPFYLSSGLCIFSALLTFFLC).

Belongs to the major facilitator superfamily. Sugar transporter (TC 2.A.1.1) family.

The protein resides in the cell membrane. In terms of biological role, probable glycerophosphodiester transporter. Does not possess detectable glycerophosphoinositol (GroPIns) transport activity. Might be involved in the uptake of glycerophosphocholine (GroPCho). The expanded ability to utilize GroPIns and GroPCho results from the organism's pathogenic nature and its need to occupy a variety of environments within its host organism. This possibility is buttressed by the fact that GroPIns and GroPCho are present and abundant in human fluids. The chain is Glycerophosphodiester transporter GIT2 from Candida albicans (strain SC5314 / ATCC MYA-2876) (Yeast).